Here is an 81-residue protein sequence, read N- to C-terminus: NADH-ubiquinone oxidoreductase chain 6 (81 aa).

Transmembrane regions (helical) follow at residues 1–21 (MTYF…GVAS), 27–47 (YGVV…LSLG), and 48–68 (VSFV…VVFV).

Belongs to the complex I subunit 6 family.

It is found in the mitochondrion membrane. It catalyses the reaction a ubiquinone + NADH + 5 H(+)(in) = a ubiquinol + NAD(+) + 4 H(+)(out). Core subunit of the mitochondrial membrane respiratory chain NADH dehydrogenase (Complex I) that is believed to belong to the minimal assembly required for catalysis. Complex I functions in the transfer of electrons from NADH to the respiratory chain. The immediate electron acceptor for the enzyme is believed to be ubiquinone. In Anas platyrhynchos (Mallard), this protein is NADH-ubiquinone oxidoreductase chain 6 (MT-ND6).